The following is a 198-amino-acid chain: Rac-like GTP-binding protein ARAC3 (198 aa).

GTP-binding positions include 13–21 (GDGAVGKTC), 31–38 (FPTDYVPT), 60–64 (DTAGQ), and 118–121 (TKLD). The Effector region motif lies at 35–43 (YVPTVFDNF). Residue Cys158 is the site of S-palmitoyl cysteine attachment. The residue at position 195 (Cys195) is a Cysteine methyl ester. A lipid anchor (S-geranylgeranyl cysteine) is attached at Cys195. Positions 196–198 (SIL) are cleaved as a propeptide — removed in mature form.

This sequence belongs to the small GTPase superfamily. Rho family. As to quaternary structure, interacts with Rho GDP-dissociation inhibitor 1 and ICR1. Binds to SPK1 when in the inactive GDP-bound form. In terms of tissue distribution, ubiquitous. Preferentially expressed at the tip of root hairs.

It is found in the cytoplasm. The protein localises to the cell membrane. In terms of biological role, inactive GDP-bound Rho GTPases reside in the cytosol, are found in a complex with Rho GDP-dissociation inhibitors (Rho GDIs), and are released from the GDI protein in order to translocate to membranes upon activation. Involved in cell polarity control during the actin-dependent tip growth of root hairs, thus regulating root hair length and root hair initiation. Contributes, in a SPK1-dependent manner, to the prevention of cortical microtubules organization into parallel arrays oriented perpendicular to the axis of cell elongation to limit anisotropic cell growth during petal development. SPK1-dependent activation is required for auxin-mediated inhibition of PIN2 internalization during gravitropic responses. This is Rac-like GTP-binding protein ARAC3 from Arabidopsis thaliana (Mouse-ear cress).